The sequence spans 306 residues: Serine/threonine-protein phosphatase PP2A-1 catalytic subunit (306 aa).

4 residues coordinate Mn(2+): D54, H56, D82, and N114. The active-site Proton donor is the H115. Mn(2+) contacts are provided by H164 and H238.

It belongs to the PPP phosphatase family. PP-2A subfamily. Requires Mn(2+) as cofactor.

The protein localises to the cytoplasm. The enzyme catalyses O-phospho-L-seryl-[protein] + H2O = L-seryl-[protein] + phosphate. The catalysed reaction is O-phospho-L-threonyl-[protein] + H2O = L-threonyl-[protein] + phosphate. This is Serine/threonine-protein phosphatase PP2A-1 catalytic subunit (PP2A1) from Oryza sativa subsp. indica (Rice).